Consider the following 342-residue polypeptide: N-acetyl-gamma-glutamyl-phosphate reductase (342 aa).

The active site involves Cys149.

It belongs to the NAGSA dehydrogenase family. Type 1 subfamily.

The protein localises to the cytoplasm. It catalyses the reaction N-acetyl-L-glutamate 5-semialdehyde + phosphate + NADP(+) = N-acetyl-L-glutamyl 5-phosphate + NADPH + H(+). Its pathway is amino-acid biosynthesis; L-arginine biosynthesis; N(2)-acetyl-L-ornithine from L-glutamate: step 3/4. Functionally, catalyzes the NADPH-dependent reduction of N-acetyl-5-glutamyl phosphate to yield N-acetyl-L-glutamate 5-semialdehyde. This Aromatoleum aromaticum (strain DSM 19018 / LMG 30748 / EbN1) (Azoarcus sp. (strain EbN1)) protein is N-acetyl-gamma-glutamyl-phosphate reductase.